The chain runs to 446 residues: High mobility group B protein 13 (446 aa).

2 disordered regions span residues 1–43 (MSTV…TKSF) and 110–130 (LAQT…AETK). Basic residues predominate over residues 11-22 (AKKSRNSRKALK). 2 DNA-binding regions (HMG box) span residues 129-197 (TKRP…TKEK) and 246-312 (PKQP…EGYK). The span at 349–371 (NIIKKTKETAKNKKKNENVDPNK) shows a compositional bias: basic and acidic residues. Positions 349-377 (NIIKKTKETAKNKKKNENVDPNKPKKPTS) are disordered. The HMG box 3 DNA-binding region spans 372–440 (PKKPTSSYFL…AYKKEVEEYN (69 aa)).

This sequence belongs to the HMGB family.

The protein resides in the nucleus. This chain is High mobility group B protein 13 (HMGB13), found in Arabidopsis thaliana (Mouse-ear cress).